The primary structure comprises 407 residues: Arginine biosynthesis bifunctional protein ArgJ (407 aa).

Substrate-binding residues include threonine 157, lysine 183, threonine 194, glutamate 280, asparagine 402, and threonine 407. Threonine 194 serves as the catalytic Nucleophile.

Belongs to the ArgJ family. In terms of assembly, heterotetramer of two alpha and two beta chains.

It is found in the cytoplasm. It catalyses the reaction N(2)-acetyl-L-ornithine + L-glutamate = N-acetyl-L-glutamate + L-ornithine. It carries out the reaction L-glutamate + acetyl-CoA = N-acetyl-L-glutamate + CoA + H(+). Its pathway is amino-acid biosynthesis; L-arginine biosynthesis; L-ornithine and N-acetyl-L-glutamate from L-glutamate and N(2)-acetyl-L-ornithine (cyclic): step 1/1. It functions in the pathway amino-acid biosynthesis; L-arginine biosynthesis; N(2)-acetyl-L-ornithine from L-glutamate: step 1/4. Catalyzes two activities which are involved in the cyclic version of arginine biosynthesis: the synthesis of N-acetylglutamate from glutamate and acetyl-CoA as the acetyl donor, and of ornithine by transacetylation between N(2)-acetylornithine and glutamate. The protein is Arginine biosynthesis bifunctional protein ArgJ of Bacillus cereus (strain ATCC 10987 / NRS 248).